The sequence spans 227 residues: Flagellar transcriptional regulator FtcR (227 aa).

In terms of domain architecture, Response regulatory spans Met-1 to Arg-116. A DNA-binding region (ompR/PhoB-type) is located at residues Ala-127–Ile-226.

In terms of biological role, required for transcription of flagellar genes. This chain is Flagellar transcriptional regulator FtcR (ftcR), found in Brucella abortus (strain 2308).